The following is a 92-amino-acid chain: Large ribosomal subunit protein uL24c (92 aa).

It belongs to the universal ribosomal protein uL24 family. Part of the 50S ribosomal subunit.

Its subcellular location is the plastid. It localises to the chloroplast. One of two assembly initiator proteins, it binds directly to the 5'-end of the 23S rRNA, where it nucleates assembly of the 50S subunit. The polypeptide is Large ribosomal subunit protein uL24c (rpl24) (Gracilaria tenuistipitata var. liui (Red alga)).